The chain runs to 316 residues: Large ribosomal subunit protein uL10 (316 aa).

The interval 289-316 (AAAAAPAKEAPKEESEESDEDMGFGLFD) is disordered.

It belongs to the universal ribosomal protein uL10 family. P0 forms a pentameric complex by interaction with dimers of P1 and P2. Post-translationally, phosphorylated.

The protein resides in the nucleus. The protein localises to the cytoplasm. Functionally, ribosomal protein P0 is the functional equivalent of E.coli protein L10. The sequence is that of Large ribosomal subunit protein uL10 (RPLP0) from Gallus gallus (Chicken).